A 131-amino-acid chain; its full sequence is MENLTLSIVTPYGSIYNGEVKYVVIPGSEGEFGVFPGHCNLLSLLKVGVIEFENLEGNKGLVAINWGHAQISDTDVNIIADGAVAIAGNTESEIVAAISDAKTLLKEASDDSALFGMVVSRVESDYKNFIK.

It belongs to the ATPase epsilon chain family. As to quaternary structure, F-type ATPases have 2 components, CF(1) - the catalytic core - and CF(0) - the membrane proton channel. CF(1) has five subunits: alpha(3), beta(3), gamma(1), delta(1), epsilon(1). CF(0) has three main subunits: a, b and c.

Its subcellular location is the cell inner membrane. Produces ATP from ADP in the presence of a proton gradient across the membrane. The protein is ATP synthase epsilon chain of Helicobacter hepaticus (strain ATCC 51449 / 3B1).